Here is a 571-residue protein sequence, read N- to C-terminus: Urease subunit alpha (571 aa).

The region spanning glycine 133 to phenylalanine 571 is the Urease domain. Ni(2+) contacts are provided by histidine 138, histidine 140, and lysine 221. Lysine 221 is modified (N6-carboxylysine). A substrate-binding site is contributed by histidine 223. The Ni(2+) site is built by histidine 250 and histidine 276. The active-site Proton donor is histidine 324. Aspartate 364 contributes to the Ni(2+) binding site.

The protein belongs to the metallo-dependent hydrolases superfamily. Urease alpha subunit family. Heterotrimer of UreA (gamma), UreB (beta) and UreC (alpha) subunits. Three heterotrimers associate to form the active enzyme. It depends on Ni cation as a cofactor. Carboxylation allows a single lysine to coordinate two nickel ions.

The protein localises to the cytoplasm. The catalysed reaction is urea + 2 H2O + H(+) = hydrogencarbonate + 2 NH4(+). Its pathway is nitrogen metabolism; urea degradation; CO(2) and NH(3) from urea (urease route): step 1/1. This chain is Urease subunit alpha, found in Staphylococcus xylosus.